We begin with the raw amino-acid sequence, 174 residues long: Pituitary tumor-transforming gene 1 protein-interacting protein (174 aa).

The first 29 residues, 1-29, serve as a signal peptide directing secretion; the sequence is MASAVLGLTLRWVMFLSAVLLLLLPGASA. Over 30–93 the chain is Extracellular; sequence QEPPGVGCSE…RWGVCWVNFE (64 aa). Positions 36-89 constitute a PSI domain; sequence GCSEYTNRSCEECLRNVSCLWCNENKACLDYPVRKILPPASLCKLSSARWGVCW. 2 N-linked (GlcNAc...) asparagine glycosylation sites follow: Asn42 and Asn51. Residues 94-114 traverse the membrane as a helical segment; it reads ALIITMSVLGGSVLLGITVCC. Topologically, residues 115–174 are cytoplasmic; sequence CCCCRRKRSRKPDKSDERAMREQEERRVRQEERRAEMKSRHDEIRKKYGLFKEQNPYEKF. Residues 126–155 are disordered; that stretch reads PDKSDERAMREQEERRVRQEERRAEMKSRH. A coiled-coil region spans residues 127 to 163; sequence DKSDERAMREQEERRVRQEERRAEMKSRHDEIRKKYG. Residue Tyr171 is modified to Phosphotyrosine.

Interacts with PTTG1.

It localises to the cell membrane. It is found in the cytoplasm. Its subcellular location is the nucleus. Its function is as follows. May facilitate PTTG1 nuclear translocation. In Rattus norvegicus (Rat), this protein is Pituitary tumor-transforming gene 1 protein-interacting protein (Pttg1ip).